We begin with the raw amino-acid sequence, 401 residues long: Nodal homolog 3-A (401 aa).

Residues Met-1 to Ala-18 form the signal peptide. Residues Met-19 to Arg-274 constitute a propeptide that is removed on maturation. 3 N-linked (GlcNAc...) asparagine glycosylation sites follow: Asn-168, Asn-337, and Asn-344. 2 disulfide bridges follow: Cys-299/Cys-365 and Cys-328/Cys-396.

Belongs to the TGF-beta family. As to quaternary structure, monomer. The propeptide region interacts with bmp4 in a non-covalent manner. In terms of tissue distribution, expressed in the dorsal marginal region of late blastula, becoming restricted to the Spemann organizer at the early gastrula stage.

The protein resides in the secreted. Its function is as follows. Exhibits mesoderm-dorsalizing activity and neural-inducing activity, but lacks mesoderm-inducing activity. Regulates the expression of specific mesodermal and neural genes. Induces convergent extension movements at the embryonic midline by activating the fgf signaling pathway to induce t/bra expression in the organizer region. Acts with wnt11 to induce Spemann organizer cells and induce axis formation. The unprocessed protein antagonizes bmp-signaling. The protein is Nodal homolog 3-A of Xenopus tropicalis (Western clawed frog).